We begin with the raw amino-acid sequence, 468 residues long: Interstitial collagenase (468 aa).

Residues 1–18 (MPGLPLLLLLLWGVGSHG) form the signal peptide. Residues 19–98 (FPAASETQEQ…PRCGVPDVAQ (80 aa)) constitute a propeptide, activation peptide. The Cysteine switch motif lies at 89–96 (PRCGVPDV). Cysteine 91 serves as a coordination point for Zn(2+). N-linked (GlcNAc...) asparagine glycosylation occurs at asparagine 119. Positions 123 and 157 each coordinate Ca(2+). Zn(2+) is bound by residues histidine 167 and aspartate 169. Ca(2+)-binding residues include aspartate 174, glycine 175, glutamate 177, and glutamine 179. Residue histidine 182 participates in Zn(2+) binding. The Ca(2+) site is built by glycine 189, glycine 191, and aspartate 193. Residue histidine 195 participates in Zn(2+) binding. Aspartate 197, glutamate 198, and aspartate 200 together coordinate Ca(2+). Histidine 217 provides a ligand contact to Zn(2+). Residue glutamate 218 is part of the active site. Zn(2+)-binding residues include histidine 221 and histidine 227. Threonine 273 is subject to Phosphothreonine. Hemopexin repeat units follow at residues 274–323 (PKVC…WPHL), 324–370 (PNGL…FGFP), 373–421 (VNHI…FPGI), and 422–465 (GNKV…WFNC). A disulfide bridge links cysteine 277 with cysteine 465. Positions 284 and 328 each coordinate Ca(2+). At tyrosine 359 the chain carries Phosphotyrosine; by PKDCC. Residues aspartate 377 and aspartate 426 each contribute to the Ca(2+) site.

Belongs to the peptidase M10A family. Ca(2+) serves as cofactor. Requires Zn(2+) as cofactor. Post-translationally, tyrosine phosphorylated in platelets by PKDCC/VLK.

The protein localises to the secreted. It localises to the extracellular space. Its subcellular location is the extracellular matrix. It catalyses the reaction Cleavage of the triple helix of collagen at about three-quarters of the length of the molecule from the N-terminus, at 775-Gly-|-Ile-776 in the alpha1(I) chain. Cleaves synthetic substrates and alpha-macroglobulins at bonds where P1' is a hydrophobic residue.. With respect to regulation, can be activated without removal of the activation peptide. Its function is as follows. Cleaves collagens of types I, II, and III at one site in the helical domain. Also cleaves collagens of types VII and X. This is Interstitial collagenase (MMP1) from Oryctolagus cuniculus (Rabbit).